We begin with the raw amino-acid sequence, 350 residues long: Glyceraldehyde-3-phosphate dehydrogenase (350 aa).

NAD(+) contacts are provided by residues 13–14 (TI) and Gly-118. Residue 147–149 (SCN) participates in D-glyceraldehyde 3-phosphate binding. Cys-148 (nucleophile) is an active-site residue. Arg-176 contributes to the NAD(+) binding site. A D-glyceraldehyde 3-phosphate-binding site is contributed by 202 to 203 (HG). Gln-309 lines the NAD(+) pocket. The interval 327–350 (LEEDPEASMDATDSALGVLNSPPL) is disordered.

Belongs to the glyceraldehyde-3-phosphate dehydrogenase family. In terms of assembly, homotetramer.

It localises to the cytoplasm. It catalyses the reaction D-glyceraldehyde 3-phosphate + phosphate + NADP(+) = (2R)-3-phospho-glyceroyl phosphate + NADPH + H(+). It carries out the reaction D-glyceraldehyde 3-phosphate + phosphate + NAD(+) = (2R)-3-phospho-glyceroyl phosphate + NADH + H(+). The protein operates within carbohydrate degradation; glycolysis; pyruvate from D-glyceraldehyde 3-phosphate: step 1/5. The sequence is that of Glyceraldehyde-3-phosphate dehydrogenase from Methanopyrus kandleri (strain AV19 / DSM 6324 / JCM 9639 / NBRC 100938).